A 396-amino-acid polypeptide reads, in one-letter code: L-lactate dehydrogenase (396 aa).

Positions 1-380 (MIISAASDYR…TQDSLVQGLG (380 aa)) constitute an FMN hydroxy acid dehydrogenase domain. A substrate-binding site is contributed by Tyr24. Ser106 and Gln127 together coordinate FMN. Tyr129 contacts substrate. Thr155 provides a ligand contact to FMN. Arg164 lines the substrate pocket. An FMN-binding site is contributed by Lys251. His275 functions as the Proton acceptor in the catalytic mechanism. Residue Arg278 participates in substrate binding. 306–330 (DSGIRNGLDVVRMIALGADTVLLGR) provides a ligand contact to FMN.

It belongs to the FMN-dependent alpha-hydroxy acid dehydrogenase family. The cofactor is FMN.

Its subcellular location is the cell inner membrane. It carries out the reaction (S)-lactate + A = pyruvate + AH2. Functionally, catalyzes the conversion of L-lactate to pyruvate. Is coupled to the respiratory chain. This chain is L-lactate dehydrogenase, found in Shigella boydii serotype 18 (strain CDC 3083-94 / BS512).